We begin with the raw amino-acid sequence, 133 residues long: Small ribosomal subunit protein uS8 (133 aa).

Belongs to the universal ribosomal protein uS8 family. Part of the 30S ribosomal subunit. Contacts proteins S5 and S12.

Functionally, one of the primary rRNA binding proteins, it binds directly to 16S rRNA central domain where it helps coordinate assembly of the platform of the 30S subunit. This Deinococcus geothermalis (strain DSM 11300 / CIP 105573 / AG-3a) protein is Small ribosomal subunit protein uS8.